Consider the following 226-residue polypeptide: Leucyl/phenylalanyl-tRNA--protein transferase (226 aa).

This sequence belongs to the L/F-transferase family.

The protein resides in the cytoplasm. It catalyses the reaction N-terminal L-lysyl-[protein] + L-leucyl-tRNA(Leu) = N-terminal L-leucyl-L-lysyl-[protein] + tRNA(Leu) + H(+). The catalysed reaction is N-terminal L-arginyl-[protein] + L-leucyl-tRNA(Leu) = N-terminal L-leucyl-L-arginyl-[protein] + tRNA(Leu) + H(+). It carries out the reaction L-phenylalanyl-tRNA(Phe) + an N-terminal L-alpha-aminoacyl-[protein] = an N-terminal L-phenylalanyl-L-alpha-aminoacyl-[protein] + tRNA(Phe). Its function is as follows. Functions in the N-end rule pathway of protein degradation where it conjugates Leu, Phe and, less efficiently, Met from aminoacyl-tRNAs to the N-termini of proteins containing an N-terminal arginine or lysine. The protein is Leucyl/phenylalanyl-tRNA--protein transferase of Stutzerimonas stutzeri (strain A1501) (Pseudomonas stutzeri).